The sequence spans 197 residues: Na(+)-translocating NADH-quinone reductase subunit E (197 aa).

6 consecutive transmembrane segments (helical) span residues 11 to 31 (SVFIENMALSFFLGMCTFLAV), 35 to 55 (VSTAFGLGVAVIFVLGLSVPV), 76 to 96 (FLKFITFIGVIAALVQILEMF), 108 to 128 (LGIYLPLITVNCAIFGAVSFM), 139 to 159 (VVYGFGAGLGWMLAIVALAGI), and 175 to 195 (LGITFIAAGLMAMAFMSFSGI).

The protein belongs to the NqrDE/RnfAE family. Composed of six subunits; NqrA, NqrB, NqrC, NqrD, NqrE and NqrF.

The protein localises to the cell inner membrane. The enzyme catalyses a ubiquinone + n Na(+)(in) + NADH + H(+) = a ubiquinol + n Na(+)(out) + NAD(+). Functionally, NQR complex catalyzes the reduction of ubiquinone-1 to ubiquinol by two successive reactions, coupled with the transport of Na(+) ions from the cytoplasm to the periplasm. NqrA to NqrE are probably involved in the second step, the conversion of ubisemiquinone to ubiquinol. The chain is Na(+)-translocating NADH-quinone reductase subunit E from Neisseria meningitidis serogroup B (strain ATCC BAA-335 / MC58).